The following is a 216-amino-acid chain: Maleylacetoacetate isomerase (216 aa).

Methionine 1 bears the N-acetylmethionine mark. The region spanning 4–87 is the GST N-terminal domain; the sequence is GKPVLYSYFR…YLEETRPIPR (84 aa). Residues 14–19 and glutamine 45 contribute to the glutathione site; that span reads SSCSWR. The residue at position 57 (lysine 57) is an N6-succinyllysine. Glutathione is bound by residues valine 59, 71–72, glutamine 111, and 115–117; these read QS and NLS. One can recognise a GST C-terminal domain in the interval 92 to 212; sequence DPQKRAIVRM…HPCRQPDTPA (121 aa). Threonine 136 is modified (phosphothreonine). Residue serine 137 is modified to Phosphoserine. Lysine 177 is modified (N6-succinyllysine). A Phosphoserine modification is found at serine 181.

Belongs to the GST superfamily. Zeta family. As to quaternary structure, homodimer. Glutathione serves as cofactor. Post-translationally, the N-terminus is blocked.

The protein resides in the cytoplasm. It carries out the reaction 4-maleylacetoacetate = 4-fumarylacetoacetate. The catalysed reaction is RX + glutathione = an S-substituted glutathione + a halide anion + H(+). It participates in amino-acid degradation; L-phenylalanine degradation; acetoacetate and fumarate from L-phenylalanine: step 5/6. Probable bifunctional enzyme showing minimal glutathione-conjugating activity with ethacrynic acid and 7-chloro-4-nitrobenz-2-oxa-1, 3-diazole and maleylacetoacetate isomerase activity. Also has low glutathione peroxidase activity with t-butyl and cumene hydroperoxides. Is able to catalyze the glutathione dependent oxygenation of dichloroacetic acid to glyoxylic acid. This is Maleylacetoacetate isomerase (Gstz1) from Rattus norvegicus (Rat).